The chain runs to 93 residues: MSNRVSTGKMAMAPQESVQPAVLYKLVLFALLMAVVPIGTYFSTLNYLWDGSTTFAAISAIAAANLILVGYVVVAFREDAASRTGPLPEKKTS.

The Cytoplasmic portion of the chain corresponds to 1–21 (MSNRVSTGKMAMAPQESVQPA). Residues 22-42 (VLYKLVLFALLMAVVPIGTYF) traverse the membrane as a helical segment. The Lumenal segment spans residues 43–54 (STLNYLWDGSTT). A helical membrane pass occupies residues 55-75 (FAAISAIAAANLILVGYVVVA). The Cytoplasmic segment spans residues 76-93 (FREDAASRTGPLPEKKTS). The Prevents secretion from ER motif lies at 90–93 (KKTS).

Belongs to the VMA21 family.

It is found in the endoplasmic reticulum membrane. The protein localises to the endoplasmic reticulum-Golgi intermediate compartment membrane. It localises to the cytoplasmic vesicle. The protein resides in the COPII-coated vesicle membrane. Required for the assembly of the V0 complex of the vacuolar ATPase (V-ATPase) in the endoplasmic reticulum. This is Vacuolar ATPase assembly integral membrane protein VMA21 from Cryptococcus neoformans var. neoformans serotype D (strain JEC21 / ATCC MYA-565) (Filobasidiella neoformans).